Reading from the N-terminus, the 190-residue chain is Small ribosomal subunit protein uS5 (190 aa).

In terms of domain architecture, S5 DRBM spans 19 to 82; that stretch reads IIDKLVTINR…ERAKRSMIRV (64 aa). The disordered stretch occupies residues 161–190; sequence SVASRRGKKVSDILGRREPVAGQEGEEAHA. Residues 169 to 179 show a composition bias toward basic and acidic residues; sequence KVSDILGRREP.

The protein belongs to the universal ribosomal protein uS5 family. In terms of assembly, part of the 30S ribosomal subunit. Contacts proteins S4 and S8.

With S4 and S12 plays an important role in translational accuracy. In terms of biological role, located at the back of the 30S subunit body where it stabilizes the conformation of the head with respect to the body. The sequence is that of Small ribosomal subunit protein uS5 from Granulibacter bethesdensis (strain ATCC BAA-1260 / CGDNIH1).